The following is a 315-amino-acid chain: MKLLIIKIDTSQEVEDALSIYAMDNLNALGVESRNRSDFEQAGWLHDSTVVDMDDIKDLPKDTYFYAYFDEEADRDELVKKFQDKMQELKGYGLNIGDAKITTSYIEDQDWNTAWQKYYHVINFSRHLAIVPKWEDYKPAFKDQQLIKLDPGLAFGTGNHKTTQLAMMGLERAIVKKPISVVDVGTGSGILAIAASKLGATDILATDISDESMTATEQNSALNDIKNIRVQKTSLLADVDGKFDIIVANILAEILLELIPQMDAHLNEGGQVIFSGIDYLQLPKIEKSLDENGFKIDLTMKQGRWVGLAITRKEK.

Threonine 163, glycine 185, aspartate 207, and asparagine 249 together coordinate S-adenosyl-L-methionine.

It belongs to the methyltransferase superfamily. PrmA family.

Its subcellular location is the cytoplasm. The catalysed reaction is L-lysyl-[protein] + 3 S-adenosyl-L-methionine = N(6),N(6),N(6)-trimethyl-L-lysyl-[protein] + 3 S-adenosyl-L-homocysteine + 3 H(+). Functionally, methylates ribosomal protein L11. The chain is Ribosomal protein L11 methyltransferase from Lactobacillus helveticus (strain DPC 4571).